The sequence spans 199 residues: Adenylyl-sulfate kinase (199 aa).

Residues 1–21 (MSQSSNITWHDSEVTKSDRQQ) are disordered. Over residues 10–19 (HDSEVTKSDR) the composition is skewed to basic and acidic residues. An ATP-binding site is contributed by 34 to 41 (GLSGSGKS). The active-site Phosphoserine intermediate is serine 108.

The protein belongs to the APS kinase family.

The enzyme catalyses adenosine 5'-phosphosulfate + ATP = 3'-phosphoadenylyl sulfate + ADP + H(+). The protein operates within sulfur metabolism; hydrogen sulfide biosynthesis; sulfite from sulfate: step 2/3. Its function is as follows. Catalyzes the synthesis of activated sulfate. This chain is Adenylyl-sulfate kinase, found in Staphylococcus haemolyticus (strain JCSC1435).